We begin with the raw amino-acid sequence, 390 residues long: Chorismate synthase 2 (390 aa).

Residues Arg39 and Arg45 each contribute to the NADP(+) site. Residues 132–134 (RSS), 253–254 (NA), Gly298, 313–317 (KPIPT), and Arg339 each bind FMN.

It belongs to the chorismate synthase family. In terms of assembly, homotetramer. FMNH2 is required as a cofactor.

It carries out the reaction 5-O-(1-carboxyvinyl)-3-phosphoshikimate = chorismate + phosphate. Its pathway is metabolic intermediate biosynthesis; chorismate biosynthesis; chorismate from D-erythrose 4-phosphate and phosphoenolpyruvate: step 7/7. Catalyzes the anti-1,4-elimination of the C-3 phosphate and the C-6 proR hydrogen from 5-enolpyruvylshikimate-3-phosphate (EPSP) to yield chorismate, which is the branch point compound that serves as the starting substrate for the three terminal pathways of aromatic amino acid biosynthesis. This reaction introduces a second double bond into the aromatic ring system. In Bacillus cereus (strain ATCC 10987 / NRS 248), this protein is Chorismate synthase 2.